The chain runs to 345 residues: NADH-quinone oxidoreductase subunit H (345 aa).

The next 8 helical transmembrane spans lie at 13-33, 84-104, 115-135, 161-181, 190-210, 248-268, 278-298, and 309-329; these read VLII…LLFL, FMLA…VIPF, VAIL…IMGG, IGLI…SAIV, FFSW…ISAL, YIAI…GWLS, IWMV…KAIV, and LGWK…AFAA.

This sequence belongs to the complex I subunit 1 family. In terms of assembly, NDH-1 is composed of 14 different subunits. Subunits NuoA, H, J, K, L, M, N constitute the membrane sector of the complex.

The protein resides in the cell inner membrane. It carries out the reaction a quinone + NADH + 5 H(+)(in) = a quinol + NAD(+) + 4 H(+)(out). Its function is as follows. NDH-1 shuttles electrons from NADH, via FMN and iron-sulfur (Fe-S) centers, to quinones in the respiratory chain. The immediate electron acceptor for the enzyme in this species is believed to be ubiquinone. Couples the redox reaction to proton translocation (for every two electrons transferred, four hydrogen ions are translocated across the cytoplasmic membrane), and thus conserves the redox energy in a proton gradient. This subunit may bind ubiquinone. This is NADH-quinone oxidoreductase subunit H from Dinoroseobacter shibae (strain DSM 16493 / NCIMB 14021 / DFL 12).